A 674-amino-acid chain; its full sequence is L-type lectin-domain containing receptor kinase IV.3 (674 aa).

The first 22 residues, 1–22 (MFFKLFTIFFFFIILLSKPLNS), serve as a signal peptide directing secretion. Asn-21, Asn-28, Asn-40, Asn-81, Asn-136, and Asn-188 each carry an N-linked (GlcNAc...) asparagine glycan. Residues 23–296 (SSQSLNFTYN…TSLQRFYKNR (274 aa)) lie on the Extracellular side of the membrane. Residues 26 to 263 (SLNFTYNSFH…SEHFVFGWSF (238 aa)) form a legume-lectin like region. A helical membrane pass occupies residues 297-317 (MPLFSLLLIPVLFVVSLIFLV). The Cytoplasmic segment spans residues 318–674 (RFIVRRRRKF…IAYSIVSGGR (357 aa)). A Protein kinase domain is found at 355–632 (FKDKDLLGSG…LQYLRGDATL (278 aa)). ATP-binding positions include 361 to 369 (LGSGGFGRV) and Lys-384. Catalysis depends on Asp-480, which acts as the Proton acceptor.

This sequence in the C-terminal section; belongs to the protein kinase superfamily. Ser/Thr protein kinase family. In the N-terminal section; belongs to the leguminous lectin family.

It is found in the cell membrane. It catalyses the reaction L-seryl-[protein] + ATP = O-phospho-L-seryl-[protein] + ADP + H(+). The catalysed reaction is L-threonyl-[protein] + ATP = O-phospho-L-threonyl-[protein] + ADP + H(+). The sequence is that of L-type lectin-domain containing receptor kinase IV.3 (LECRK43) from Arabidopsis thaliana (Mouse-ear cress).